Consider the following 155-residue polypeptide: 6,7-dimethyl-8-ribityllumazine synthase (155 aa).

5-amino-6-(D-ribitylamino)uracil-binding positions include Trp22, 56-58, and 80-82; these read SFE and AVI. (2S)-2-hydroxy-3-oxobutyl phosphate is bound at residue 85 to 86; that stretch reads AT. Residue His88 is the Proton donor of the active site. A 5-amino-6-(D-ribitylamino)uracil-binding site is contributed by Phe113. Arg127 is a (2S)-2-hydroxy-3-oxobutyl phosphate binding site.

The protein belongs to the DMRL synthase family.

It carries out the reaction (2S)-2-hydroxy-3-oxobutyl phosphate + 5-amino-6-(D-ribitylamino)uracil = 6,7-dimethyl-8-(1-D-ribityl)lumazine + phosphate + 2 H2O + H(+). Its pathway is cofactor biosynthesis; riboflavin biosynthesis; riboflavin from 2-hydroxy-3-oxobutyl phosphate and 5-amino-6-(D-ribitylamino)uracil: step 1/2. Catalyzes the formation of 6,7-dimethyl-8-ribityllumazine by condensation of 5-amino-6-(D-ribitylamino)uracil with 3,4-dihydroxy-2-butanone 4-phosphate. This is the penultimate step in the biosynthesis of riboflavin. The chain is 6,7-dimethyl-8-ribityllumazine synthase from Chloroflexus aurantiacus (strain ATCC 29364 / DSM 637 / Y-400-fl).